The sequence spans 63 residues: Large ribosomal subunit protein uL30 (63 aa).

The protein belongs to the universal ribosomal protein uL30 family. Part of the 50S ribosomal subunit.

This chain is Large ribosomal subunit protein uL30, found in Chlorobium chlorochromatii (strain CaD3).